Reading from the N-terminus, the 336-residue chain is Probable tRNA pseudouridine synthase B (336 aa).

Asp81 functions as the Nucleophile in the catalytic mechanism. In terms of domain architecture, PUA spans 248–323; it reads LKKVVVKDSA…VAVDVERVYM (76 aa).

Belongs to the pseudouridine synthase TruB family. Type 2 subfamily.

The catalysed reaction is uridine(55) in tRNA = pseudouridine(55) in tRNA. Its function is as follows. Could be responsible for synthesis of pseudouridine from uracil-55 in the psi GC loop of transfer RNAs. This Methanocaldococcus jannaschii (strain ATCC 43067 / DSM 2661 / JAL-1 / JCM 10045 / NBRC 100440) (Methanococcus jannaschii) protein is Probable tRNA pseudouridine synthase B.